A 460-amino-acid chain; its full sequence is Bifunctional protein GlmU (460 aa).

The pyrophosphorylase stretch occupies residues 1–229 (MTNYAIILAA…FNESLGVNDR (229 aa)). Residues 8-11 (LAAG), lysine 22, glutamine 72, and 77-78 (GT) contribute to the UDP-N-acetyl-alpha-D-glucosamine site. Aspartate 102 contacts Mg(2+). 4 residues coordinate UDP-N-acetyl-alpha-D-glucosamine: glycine 139, glutamate 154, asparagine 169, and asparagine 227. Residue asparagine 227 participates in Mg(2+) binding. The segment at 230-250 (VALATAETVMRQRITQKHMVN) is linker. An N-acetyltransferase region spans residues 251-460 (GVTFQNPETV…RLAHHPSRSK (210 aa)). UDP-N-acetyl-alpha-D-glucosamine contacts are provided by arginine 332 and lysine 350. The active-site Proton acceptor is the histidine 362. Tyrosine 365 and asparagine 376 together coordinate UDP-N-acetyl-alpha-D-glucosamine. Acetyl-CoA is bound by residues alanine 379, 385–386 (NY), serine 404, alanine 422, and arginine 439.

The protein in the N-terminal section; belongs to the N-acetylglucosamine-1-phosphate uridyltransferase family. This sequence in the C-terminal section; belongs to the transferase hexapeptide repeat family. In terms of assembly, homotrimer. Mg(2+) is required as a cofactor.

The protein resides in the cytoplasm. The enzyme catalyses alpha-D-glucosamine 1-phosphate + acetyl-CoA = N-acetyl-alpha-D-glucosamine 1-phosphate + CoA + H(+). It catalyses the reaction N-acetyl-alpha-D-glucosamine 1-phosphate + UTP + H(+) = UDP-N-acetyl-alpha-D-glucosamine + diphosphate. It participates in nucleotide-sugar biosynthesis; UDP-N-acetyl-alpha-D-glucosamine biosynthesis; N-acetyl-alpha-D-glucosamine 1-phosphate from alpha-D-glucosamine 6-phosphate (route II): step 2/2. The protein operates within nucleotide-sugar biosynthesis; UDP-N-acetyl-alpha-D-glucosamine biosynthesis; UDP-N-acetyl-alpha-D-glucosamine from N-acetyl-alpha-D-glucosamine 1-phosphate: step 1/1. Its pathway is bacterial outer membrane biogenesis; LPS lipid A biosynthesis. Catalyzes the last two sequential reactions in the de novo biosynthetic pathway for UDP-N-acetylglucosamine (UDP-GlcNAc). The C-terminal domain catalyzes the transfer of acetyl group from acetyl coenzyme A to glucosamine-1-phosphate (GlcN-1-P) to produce N-acetylglucosamine-1-phosphate (GlcNAc-1-P), which is converted into UDP-GlcNAc by the transfer of uridine 5-monophosphate (from uridine 5-triphosphate), a reaction catalyzed by the N-terminal domain. This Streptococcus pyogenes serotype M18 (strain MGAS8232) protein is Bifunctional protein GlmU.